The chain runs to 211 residues: PITH domain-containing protein GA19395 (211 aa).

The region spanning Asp20–Arg192 is the PITH domain.

Belongs to the PITHD1 family.

The chain is PITH domain-containing protein GA19395 from Drosophila pseudoobscura pseudoobscura (Fruit fly).